The sequence spans 878 residues: Alanine--tRNA ligase (878 aa).

Residues histidine 568, histidine 572, cysteine 669, and histidine 673 each contribute to the Zn(2+) site.

This sequence belongs to the class-II aminoacyl-tRNA synthetase family. Zn(2+) is required as a cofactor.

Its subcellular location is the cytoplasm. The enzyme catalyses tRNA(Ala) + L-alanine + ATP = L-alanyl-tRNA(Ala) + AMP + diphosphate. Functionally, catalyzes the attachment of alanine to tRNA(Ala) in a two-step reaction: alanine is first activated by ATP to form Ala-AMP and then transferred to the acceptor end of tRNA(Ala). Also edits incorrectly charged Ser-tRNA(Ala) and Gly-tRNA(Ala) via its editing domain. This is Alanine--tRNA ligase from Polaromonas sp. (strain JS666 / ATCC BAA-500).